Reading from the N-terminus, the 339-residue chain is Beta-ketoacyl-[acyl-carrier-protein] synthase III (339 aa).

Active-site residues include C119 and H262. The ACP-binding stretch occupies residues 263 to 267; it reads QANQR. N292 is an active-site residue.

The protein belongs to the thiolase-like superfamily. FabH family. As to quaternary structure, homodimer.

The protein localises to the cytoplasm. It catalyses the reaction malonyl-[ACP] + acetyl-CoA + H(+) = 3-oxobutanoyl-[ACP] + CO2 + CoA. The protein operates within lipid metabolism; fatty acid biosynthesis. In terms of biological role, catalyzes the condensation reaction of fatty acid synthesis by the addition to an acyl acceptor of two carbons from malonyl-ACP. Catalyzes the first condensation reaction which initiates fatty acid synthesis and may therefore play a role in governing the total rate of fatty acid production. Possesses both acetoacetyl-ACP synthase and acetyl transacylase activities. Its substrate specificity determines the biosynthesis of branched-chain and/or straight-chain of fatty acids. This chain is Beta-ketoacyl-[acyl-carrier-protein] synthase III, found in Prochlorococcus marinus (strain MIT 9313).